Reading from the N-terminus, the 468-residue chain is Tapasin-related protein (468 aa).

Residues 1-18 (MGTQEGWCLLLCLALSGA) form the signal peptide. Over 19-405 (AETKPHPAEG…STQVVPPERR (387 aa)) the chain is Lumenal. In terms of domain architecture, Ig-like V-type spans 181 to 297 (PQGTVRTAVE…SLYRAQQIIQ (117 aa)). 2 disulfide bridges follow: Cys212–Cys283 and Cys321–Cys382. The Ig-like C1-type domain maps to 304-394 (PKVRLSLANE…THISLEEPLG (91 aa)). A helical membrane pass occupies residues 406–426 (TALGVIFASSLFLLALMFLGL). Topologically, residues 427–468 (QRRQAPTGLGLLQAERWETTSCADTQSSHLHEDRTARVSQPS) are cytoplasmic. The interval 449 to 468 (ADTQSSHLHEDRTARVSQPS) is disordered.

As to quaternary structure, interacts with peptide-free HLA-A*02-B2M complexes or those loaded with low affinity peptides, likely facilitating peptide exchange onto higher affinity peptides. Interacts with MR1 in a ligand-independent way; this interaction may stabilize MR1 pool and facilitate ligand loading and dissociation.

The protein localises to the cell membrane. Its subcellular location is the endoplasmic reticulum membrane. It localises to the microsome membrane. It is found in the golgi apparatus membrane. Its function is as follows. Component of the antigen processing and presentation pathway, which binds to MHC class I coupled with beta2-microglobulin/B2M. Association between TAPBPR and MHC class I occurs in the absence of a functional peptide-loading complex (PLC). The protein is Tapasin-related protein (TAPBPL) of Homo sapiens (Human).